The sequence spans 382 residues: Dual-specificity RNA methyltransferase RlmN (382 aa).

Residue E91 is the Proton acceptor of the active site. Positions 97–339 constitute a Radical SAM core domain; sequence ETDRGTLCIS…TTVRKTRGDD (243 aa). A disulfide bond links C104 and C344. Positions 111, 115, and 118 each coordinate [4Fe-4S] cluster. S-adenosyl-L-methionine-binding positions include 165 to 166, S197, 219 to 221, and N301; these read GE and SLH. The active-site S-methylcysteine intermediate is C344.

Belongs to the radical SAM superfamily. RlmN family. [4Fe-4S] cluster is required as a cofactor.

It localises to the cytoplasm. It carries out the reaction adenosine(2503) in 23S rRNA + 2 reduced [2Fe-2S]-[ferredoxin] + 2 S-adenosyl-L-methionine = 2-methyladenosine(2503) in 23S rRNA + 5'-deoxyadenosine + L-methionine + 2 oxidized [2Fe-2S]-[ferredoxin] + S-adenosyl-L-homocysteine. The catalysed reaction is adenosine(37) in tRNA + 2 reduced [2Fe-2S]-[ferredoxin] + 2 S-adenosyl-L-methionine = 2-methyladenosine(37) in tRNA + 5'-deoxyadenosine + L-methionine + 2 oxidized [2Fe-2S]-[ferredoxin] + S-adenosyl-L-homocysteine. Specifically methylates position 2 of adenine 2503 in 23S rRNA and position 2 of adenine 37 in tRNAs. m2A2503 modification seems to play a crucial role in the proofreading step occurring at the peptidyl transferase center and thus would serve to optimize ribosomal fidelity. This is Dual-specificity RNA methyltransferase RlmN from Polaromonas naphthalenivorans (strain CJ2).